Here is a 218-residue protein sequence, read N- to C-terminus: Interleukin-37 (218 aa).

Positions 1–40 (MSFVGENSGVKMGSEDWEKDEPQCCLEDPAGSPLEPGPSL) are disordered. Residues 1–45 (MSFVGENSGVKMGSEDWEKDEPQCCLEDPAGSPLEPGPSLPTMNF) constitute a propeptide, removed in mature form. Residues 13 to 22 (GSEDWEKDEP) are compositionally biased toward basic and acidic residues.

Belongs to the IL-1 family. As to quaternary structure, interacts with SMAD3. Binds IL18R1, but not to IL1R1, with lower affinity than IL18, and does not seem to act as a receptor antagonist for IL18. Interacts with cargo receptor TMED10; the interaction mediates the translocation from the cytoplasm into the ERGIC (endoplasmic reticulum-Golgi intermediate compartment) and thereby secretion. In terms of processing, proteolytically converted to the mature form by CASP1. In terms of tissue distribution, in general, low constitutive expression, if any, in healthy tissues; high expression in inflammatory counterparts, including in synovial tissues from individuals with active rheumatoid arthritis. Isoform A, isoform B and isoform C are expressed in testis, colon, placenta, lung and lymph node. Isoform D and isoform E were found only in testis and bone marrow. Whereas only isoform A is found in brain, only isoform B in kidney and only isoform C in heart.

Its subcellular location is the cytoplasm. The protein localises to the cytosol. It is found in the nucleus. The protein resides in the secreted. Its function is as follows. Immune regulatory cytokine that acts as a suppressor of innate inflammatory and immune responses involved in curbing excessive inflammation. Signaling can occur via two mechanisms, intracellularly through nuclear translocation with SMAD3 and extracellularly after secretion and binding to its receptor composed of IL18R1 and IL18RAP. Suppresses, or reduces, pro-inflammatory cytokine production, including IL1A and IL6, as well as CCL12, CSF1, CSF2, CXCL13, IL1B, IL23A and IL1RN, but spares anti-inflammatory cytokines. Inhibits dendritic cell activation. The chain is Interleukin-37 from Homo sapiens (Human).